Consider the following 178-residue polypeptide: UPF0228 protein MM_0401 (178 aa).

The protein belongs to the UPF0228 family.

The sequence is that of UPF0228 protein MM_0401 from Methanosarcina mazei (strain ATCC BAA-159 / DSM 3647 / Goe1 / Go1 / JCM 11833 / OCM 88) (Methanosarcina frisia).